The primary structure comprises 94 residues: Small ribosomal subunit protein bS16 (94 aa).

This sequence belongs to the bacterial ribosomal protein bS16 family.

This chain is Small ribosomal subunit protein bS16, found in Thermosipho africanus (strain TCF52B).